The following is a 65-amino-acid chain: Large ribosomal subunit protein uL29 (65 aa).

Belongs to the universal ribosomal protein uL29 family.

The polypeptide is Large ribosomal subunit protein uL29 (Mycoplasmopsis synoviae (strain 53) (Mycoplasma synoviae)).